Consider the following 173-residue polypeptide: Mesogenin-1 (173 aa).

A compositionally biased stretch (polar residues) spans 39 to 68 (ESYSLSQTPSPQSVSPAASYESTYSSSPHT). Disordered stretches follow at residues 39–69 (ESYS…PHTG) and 96–117 (TKKD…ASER). A compositionally biased stretch (basic residues) spans 99–114 (DHGHKTSMTTHRRRKA). The 55-residue stretch at 109-163 (HRRRKASEREKLRMRAIAEALHTLRNNLPPMYSQGRQPLTKIQTLKCTINYISEL) folds into the bHLH domain.

It localises to the nucleus. Its function is as follows. Involved in specifying the paraxial, but not dorsal, mesoderm. May regulate the expression of T-box transcription factors required for mesoderm formation and differentiation, such as brachyury T, wnt8, vegt and eomes. This is Mesogenin-1 (msgn1) from Xenopus laevis (African clawed frog).